Reading from the N-terminus, the 137-residue chain is Protein MGF 110-7L (137 aa).

Positions 1–20 (MLVIILGVIGLLASSNLVSS) are cleaved as a signal peptide. N-linked (GlcNAc...) asparagine; by host glycans are attached at residues Asn-69, Asn-70, and Asn-105.

It belongs to the asfaviruses V110 family.

This Ornithodoros (relapsing fever ticks) protein is Protein MGF 110-7L.